A 354-amino-acid polypeptide reads, in one-letter code: Sphingosine-1-phosphate phosphatase 2 (354 aa).

4 helical membrane-spanning segments follow: residues 43-63, 76-96, 115-135, and 140-160; these read YLFR…FLPF, LVVI…ILKW, YGMP…LLIS, and YQYP…LVCL. Residues 91–99 form a phosphatase sequence motif I region; it reads KDILKWPRP. The interval 118–121 is phosphatase sequence motif II; it reads PSTH. Residue H121 is the Proton donor of the active site. A phosphatase sequence motif III region spans residues 161–172; it reads SRLYTGMHTVLD. H168 acts as the Nucleophile in catalysis. 5 consecutive transmembrane segments (helical) span residues 173–193, 202–222, 235–255, 273–293, and 334–354; these read ILGG…AWTL, PLFP…YPVS, IVAA…FQLV, TDML…ILLV, and TSVG…LGLL.

Belongs to the type 2 lipid phosphate phosphatase family. As to expression, highly expressed in pancreatic islets. Expressed in lung, small interstince, colon, kideny and brain.

It is found in the endoplasmic reticulum membrane. It carries out the reaction sphinganine 1-phosphate + H2O = sphinganine + phosphate. It catalyses the reaction sphing-4-enine 1-phosphate + H2O = sphing-4-enine + phosphate. The catalysed reaction is (4R)-hydroxysphinganine 1-phosphate + H2O = (4R)-hydroxysphinganine + phosphate. Functionally, has specific phosphohydrolase activity towards sphingoid base 1-phosphates. Has high phosphohydrolase activity against dihydrosphingosine-1-phosphate and sphingosine-1-phosphate (S1P) in vitro. Sphingosine-1-phosphate phosphatase activity is needed for efficient recycling of sphingosine into the sphingolipid synthesis pathway. May play a role in attenuating intracellular sphingosine 1-phosphate (S1P) signaling. May play a role in pro-inflammatory signaling. Plays a role in the regulation of pancreatic islet beta-cell endoplasmic reticulum stress and proliferation. This chain is Sphingosine-1-phosphate phosphatase 2, found in Mus musculus (Mouse).